A 145-amino-acid chain; its full sequence is D-aminoacyl-tRNA deacylase (145 aa).

The short motif at G137–P138 is the Gly-cisPro motif, important for rejection of L-amino acids element.

Belongs to the DTD family. Homodimer.

It is found in the cytoplasm. The catalysed reaction is glycyl-tRNA(Ala) + H2O = tRNA(Ala) + glycine + H(+). It catalyses the reaction a D-aminoacyl-tRNA + H2O = a tRNA + a D-alpha-amino acid + H(+). Its function is as follows. An aminoacyl-tRNA editing enzyme that deacylates mischarged D-aminoacyl-tRNAs. Also deacylates mischarged glycyl-tRNA(Ala), protecting cells against glycine mischarging by AlaRS. Acts via tRNA-based rather than protein-based catalysis; rejects L-amino acids rather than detecting D-amino acids in the active site. By recycling D-aminoacyl-tRNA to D-amino acids and free tRNA molecules, this enzyme counteracts the toxicity associated with the formation of D-aminoacyl-tRNA entities in vivo and helps enforce protein L-homochirality. The protein is D-aminoacyl-tRNA deacylase of Saccharophagus degradans (strain 2-40 / ATCC 43961 / DSM 17024).